The chain runs to 160 residues: Cytochrome b6-f complex subunit 4 (160 aa).

3 consecutive transmembrane segments (helical) span residues 36–56, 95–115, and 131–151; these read LLYI…GLAV, LLGV…PFLE, and TVFL…TLPI.

It belongs to the cytochrome b family. PetD subfamily. The 4 large subunits of the cytochrome b6-f complex are cytochrome b6, subunit IV (17 kDa polypeptide, petD), cytochrome f and the Rieske protein, while the 4 small subunits are petG, petL, petM and petN. The complex functions as a dimer.

The protein localises to the plastid. Its subcellular location is the chloroplast thylakoid membrane. Functionally, component of the cytochrome b6-f complex, which mediates electron transfer between photosystem II (PSII) and photosystem I (PSI), cyclic electron flow around PSI, and state transitions. This is Cytochrome b6-f complex subunit 4 from Lotus japonicus (Lotus corniculatus var. japonicus).